Reading from the N-terminus, the 276-residue chain is ADP-dependent (S)-NAD(P)H-hydrate dehydratase (276 aa).

In terms of domain architecture, YjeF C-terminal spans 7–275; sequence TEEHVRATLP…DILPRVWKRF (269 aa). Positions 42, 104, and 149 each coordinate (6S)-NADPHX. Residues 186-190 and G215 each bind AMP; that span reads KGNQT. D216 is a (6S)-NADPHX binding site.

Belongs to the NnrD/CARKD family. Homotetramer. Mg(2+) serves as cofactor.

It carries out the reaction (6S)-NADHX + ADP = AMP + phosphate + NADH + H(+). It catalyses the reaction (6S)-NADPHX + ADP = AMP + phosphate + NADPH + H(+). Functionally, catalyzes the dehydration of the S-form of NAD(P)HX at the expense of ADP, which is converted to AMP. Together with NAD(P)HX epimerase, which catalyzes the epimerization of the S- and R-forms, the enzyme allows the repair of both epimers of NAD(P)HX, a damaged form of NAD(P)H that is a result of enzymatic or heat-dependent hydration. This Bacillus subtilis (strain 168) protein is ADP-dependent (S)-NAD(P)H-hydrate dehydratase.